A 316-amino-acid polypeptide reads, in one-letter code: Biotin synthase (316 aa).

Positions 42-268 (LCGESVDLCT…INPTAYIRMA (227 aa)) constitute a Radical SAM core domain. [4Fe-4S] cluster-binding residues include C60, C64, and C67. Positions 104, 136, 196, and 266 each coordinate [2Fe-2S] cluster.

This sequence belongs to the radical SAM superfamily. Biotin synthase family. As to quaternary structure, homodimer. It depends on [4Fe-4S] cluster as a cofactor. [2Fe-2S] cluster is required as a cofactor.

The enzyme catalyses (4R,5S)-dethiobiotin + (sulfur carrier)-SH + 2 reduced [2Fe-2S]-[ferredoxin] + 2 S-adenosyl-L-methionine = (sulfur carrier)-H + biotin + 2 5'-deoxyadenosine + 2 L-methionine + 2 oxidized [2Fe-2S]-[ferredoxin]. Its pathway is cofactor biosynthesis; biotin biosynthesis; biotin from 7,8-diaminononanoate: step 2/2. Functionally, catalyzes the conversion of dethiobiotin (DTB) to biotin by the insertion of a sulfur atom into dethiobiotin via a radical-based mechanism. In Clostridium beijerinckii (strain ATCC 51743 / NCIMB 8052) (Clostridium acetobutylicum), this protein is Biotin synthase.